A 459-amino-acid chain; its full sequence is DnaJ protein homolog XDJ1 (459 aa).

The J domain maps to 7 to 79 (GDRLYDVLGV…KSHYDLYGDD (73 aa)). The segment at 146 to 240 (GKKLKFDLKR…CAGLGLLSKK (95 aa)) adopts a CR-type zinc-finger fold. CXXCXGXG motif repeat units lie at residues 159-166 (CIKCHGSG), 181-188 (CESCAGKG), 208-215 (CEKCNGKG), and 228-235 (CPDCAGLG).

The protein resides in the mitochondrion outer membrane. In Saccharomyces cerevisiae (strain ATCC 204508 / S288c) (Baker's yeast), this protein is DnaJ protein homolog XDJ1 (XDJ1).